A 756-amino-acid polypeptide reads, in one-letter code: Catalase-peroxidase (756 aa).

Positions 1–26 are cleaved as a signal peptide; the sequence is MKGKTVNKQTLAALVSALLVFNPAVA. The tryptophyl-tyrosyl-methioninium (Trp-Tyr) (with M-274) cross-link spans 126–248; sequence WHSAGTYRTL…LGATHMGLIY (123 aa). The active-site Proton acceptor is the His-127. Positions 248–274 form a cross-link, tryptophyl-tyrosyl-methioninium (Tyr-Met) (with W-126); that stretch reads YVNPEGPKGVPDPLGSAKNIRTAFSRM. His-289 is a binding site for heme b.

Belongs to the peroxidase family. Peroxidase/catalase subfamily. As to quaternary structure, homodimer or homotetramer. The cofactor is heme b. Post-translationally, formation of the three residue Trp-Tyr-Met cross-link is important for the catalase, but not the peroxidase activity of the enzyme.

It carries out the reaction H2O2 + AH2 = A + 2 H2O. The enzyme catalyses 2 H2O2 = O2 + 2 H2O. Functionally, bifunctional enzyme with both catalase and broad-spectrum peroxidase activity. This chain is Catalase-peroxidase, found in Shewanella loihica (strain ATCC BAA-1088 / PV-4).